We begin with the raw amino-acid sequence, 303 residues long: Proteasome subunit beta (303 aa).

Positions 1 to 67 are cleaved as a propeptide — removed in mature form; by autocatalysis; the sequence is MTWQFPDRLS…SGGTGQLPHG (67 aa). Threonine 68 (nucleophile) is an active-site residue.

This sequence belongs to the peptidase T1B family. In terms of assembly, the 20S proteasome core is composed of 14 alpha and 14 beta subunits that assemble into four stacked heptameric rings, resulting in a barrel-shaped structure. The two inner rings, each composed of seven catalytic beta subunits, are sandwiched by two outer rings, each composed of seven alpha subunits. The catalytic chamber with the active sites is on the inside of the barrel. Has a gated structure, the ends of the cylinder being occluded by the N-termini of the alpha-subunits. Is capped by the proteasome-associated ATPase, ARC.

The protein localises to the cytoplasm. The enzyme catalyses Cleavage of peptide bonds with very broad specificity.. It functions in the pathway protein degradation; proteasomal Pup-dependent pathway. Its activity is regulated as follows. The formation of the proteasomal ATPase ARC-20S proteasome complex, likely via the docking of the C-termini of ARC into the intersubunit pockets in the alpha-rings, may trigger opening of the gate for substrate entry. Interconversion between the open-gate and close-gate conformations leads to a dynamic regulation of the 20S proteasome proteolysis activity. Functionally, component of the proteasome core, a large protease complex with broad specificity involved in protein degradation. This Mycobacterium avium (strain 104) protein is Proteasome subunit beta.